Here is a 312-residue protein sequence, read N- to C-terminus: Ribonuclease Z (312 aa).

Positions 63, 65, 67, 68, 141, 212, and 270 each coordinate Zn(2+). The active-site Proton acceptor is the Asp-67.

Belongs to the RNase Z family. Homodimer. The cofactor is Zn(2+).

It carries out the reaction Endonucleolytic cleavage of RNA, removing extra 3' nucleotides from tRNA precursor, generating 3' termini of tRNAs. A 3'-hydroxy group is left at the tRNA terminus and a 5'-phosphoryl group is left at the trailer molecule.. Zinc phosphodiesterase, which displays some tRNA 3'-processing endonuclease activity. Probably involved in tRNA maturation, by removing a 3'-trailer from precursor tRNA. This chain is Ribonuclease Z, found in Latilactobacillus sakei subsp. sakei (strain 23K) (Lactobacillus sakei subsp. sakei).